Here is a 416-residue protein sequence, read N- to C-terminus: Beta sliding clamp (416 aa).

This sequence belongs to the beta sliding clamp family. As to quaternary structure, forms a ring-shaped head-to-tail homodimer around DNA which binds and tethers DNA polymerases and other proteins to the DNA. The DNA replisome complex has a single clamp-loading complex (3 tau and 1 each of delta, delta', psi and chi subunits) which binds 3 Pol III cores (1 core on the leading strand and 2 on the lagging strand) each with a beta sliding clamp dimer. Additional proteins in the replisome are other copies of gamma, psi and chi, Ssb, DNA helicase and RNA primase.

Its subcellular location is the cytoplasm. Confers DNA tethering and processivity to DNA polymerases and other proteins. Acts as a clamp, forming a ring around DNA (a reaction catalyzed by the clamp-loading complex) which diffuses in an ATP-independent manner freely and bidirectionally along dsDNA. Initially characterized for its ability to contact the catalytic subunit of DNA polymerase III (Pol III), a complex, multichain enzyme responsible for most of the replicative synthesis in bacteria; Pol III exhibits 3'-5' exonuclease proofreading activity. The beta chain is required for initiation of replication as well as for processivity of DNA replication. This Chlamydia trachomatis serovar D (strain ATCC VR-885 / DSM 19411 / UW-3/Cx) protein is Beta sliding clamp (dnaN).